A 662-amino-acid chain; its full sequence is Transketolase (662 aa).

Residue His-28 participates in substrate binding. Residues His-68 and 115 to 117 (GPL) each bind thiamine diphosphate. A Mg(2+)-binding site is contributed by Asp-156. Thiamine diphosphate is bound by residues Gly-157 and Asn-186. Asn-186 and Ile-188 together coordinate Mg(2+). Substrate-binding residues include His-261, Arg-356, and Ser-383. Thiamine diphosphate is bound at residue His-261. Glu-410 acts as the Proton donor in catalysis. Phe-436 lines the thiamine diphosphate pocket. Positions 460, 468, and 519 each coordinate substrate.

This sequence belongs to the transketolase family. As to quaternary structure, homodimer. It depends on Mg(2+) as a cofactor. Ca(2+) is required as a cofactor. Requires Mn(2+) as cofactor. The cofactor is Co(2+). Thiamine diphosphate serves as cofactor.

It carries out the reaction D-sedoheptulose 7-phosphate + D-glyceraldehyde 3-phosphate = aldehydo-D-ribose 5-phosphate + D-xylulose 5-phosphate. The protein operates within carbohydrate biosynthesis; Calvin cycle. It participates in carbohydrate degradation; pentose phosphate pathway. Catalyzes the transfer of a two-carbon ketol group from a ketose donor to an aldose acceptor, via a covalent intermediate with the cofactor thiamine pyrophosphate. This chain is Transketolase (tkt), found in Staphylococcus epidermidis (strain ATCC 12228 / FDA PCI 1200).